The following is a 384-amino-acid chain: PqqA peptide cyclase (384 aa).

One can recognise a Radical SAM core domain in the interval Ile14–Arg226. Residues Cys28, Cys32, and Cys35 each coordinate [4Fe-4S] cluster.

Belongs to the radical SAM superfamily. PqqE family. Interacts with PqqD. The interaction is necessary for activity of PqqE. [4Fe-4S] cluster is required as a cofactor.

It catalyses the reaction [PQQ precursor protein] + S-adenosyl-L-methionine = E-Y cross-linked-[PQQ precursor protein] + 5'-deoxyadenosine + L-methionine + H(+). The protein operates within cofactor biosynthesis; pyrroloquinoline quinone biosynthesis. In terms of biological role, catalyzes the cross-linking of a glutamate residue and a tyrosine residue in the PqqA protein as part of the biosynthesis of pyrroloquinoline quinone (PQQ). This chain is PqqA peptide cyclase, found in Methylorubrum populi (strain ATCC BAA-705 / NCIMB 13946 / BJ001) (Methylobacterium populi).